A 359-amino-acid polypeptide reads, in one-letter code: Fructose-1,6-bisphosphatase class 1 (359 aa).

The Mg(2+) site is built by E95, D117, L119, and D120. Residues 120-123 and N212 contribute to the substrate site; that span reads DGSS. E284 is a binding site for Mg(2+).

It belongs to the FBPase class 1 family. As to quaternary structure, homotetramer. Mg(2+) is required as a cofactor.

It localises to the cytoplasm. The enzyme catalyses beta-D-fructose 1,6-bisphosphate + H2O = beta-D-fructose 6-phosphate + phosphate. It functions in the pathway carbohydrate biosynthesis; gluconeogenesis. The sequence is that of Fructose-1,6-bisphosphatase class 1 from Hydrogenophilus thermoluteolus (Pseudomonas hydrogenothermophila).